The sequence spans 397 residues: Tryptophan synthase beta chain (397 aa).

Lysine 87 bears the N6-(pyridoxal phosphate)lysine mark.

It belongs to the TrpB family. Tetramer of two alpha and two beta chains. The cofactor is pyridoxal 5'-phosphate.

The enzyme catalyses (1S,2R)-1-C-(indol-3-yl)glycerol 3-phosphate + L-serine = D-glyceraldehyde 3-phosphate + L-tryptophan + H2O. Its pathway is amino-acid biosynthesis; L-tryptophan biosynthesis; L-tryptophan from chorismate: step 5/5. The beta subunit is responsible for the synthesis of L-tryptophan from indole and L-serine. The chain is Tryptophan synthase beta chain from Escherichia coli O45:K1 (strain S88 / ExPEC).